The chain runs to 286 residues: 2-dehydro-3-deoxyphosphooctonate aldolase (286 aa).

Belongs to the KdsA family.

Its subcellular location is the cytoplasm. The catalysed reaction is D-arabinose 5-phosphate + phosphoenolpyruvate + H2O = 3-deoxy-alpha-D-manno-2-octulosonate-8-phosphate + phosphate. The protein operates within carbohydrate biosynthesis; 3-deoxy-D-manno-octulosonate biosynthesis; 3-deoxy-D-manno-octulosonate from D-ribulose 5-phosphate: step 2/3. It functions in the pathway bacterial outer membrane biogenesis; lipopolysaccharide biosynthesis. This chain is 2-dehydro-3-deoxyphosphooctonate aldolase, found in Bradyrhizobium sp. (strain BTAi1 / ATCC BAA-1182).